Here is a 294-residue protein sequence, read N- to C-terminus: Small ribosomal subunit protein uS3 (294 aa).

The KH type-2 domain maps to Val39–Arg107. A disordered region spans residues Arg210–Glu294. Residues Pro219 to Gly238 are compositionally biased toward basic and acidic residues. 2 stretches are compositionally biased toward low complexity: residues Arg249–Ala258 and Val281–Glu294.

This sequence belongs to the universal ribosomal protein uS3 family. In terms of assembly, part of the 30S ribosomal subunit. Forms a tight complex with proteins S10 and S14.

Functionally, binds the lower part of the 30S subunit head. Binds mRNA in the 70S ribosome, positioning it for translation. The sequence is that of Small ribosomal subunit protein uS3 from Verminephrobacter eiseniae (strain EF01-2).